A 171-amino-acid polypeptide reads, in one-letter code: MDRSQKADAVAELNSVFNEAGVVVVTRNLGLTVAASTELRGKMREAGASYKVAKNRLAKLALKDTDYEGIGEMLTGPIALGYSADPVAAAKAAVDFAKSNDRLEIVGGSMGGQMLDEAGVKALASMPSLDELRGTIVGLINAPATKIAQVVTAPANKLARVFGAYGASEAA.

This sequence belongs to the universal ribosomal protein uL10 family. As to quaternary structure, part of the ribosomal stalk of the 50S ribosomal subunit. The N-terminus interacts with L11 and the large rRNA to form the base of the stalk. The C-terminus forms an elongated spine to which L12 dimers bind in a sequential fashion forming a multimeric L10(L12)X complex.

Its function is as follows. Forms part of the ribosomal stalk, playing a central role in the interaction of the ribosome with GTP-bound translation factors. The protein is Large ribosomal subunit protein uL10 of Erythrobacter litoralis (strain HTCC2594).